Consider the following 142-residue polypeptide: Anti-sigma F factor (142 aa).

It belongs to the anti-sigma-factor family.

The enzyme catalyses L-seryl-[protein] + ATP = O-phospho-L-seryl-[protein] + ADP + H(+). The catalysed reaction is L-threonyl-[protein] + ATP = O-phospho-L-threonyl-[protein] + ADP + H(+). Its function is as follows. Binds to sigma F and blocks its ability to form an RNA polymerase holoenzyme (E-sigma F). Phosphorylates SpoIIAA on a serine residue. This phosphorylation may enable SpoIIAA to act as an anti-anti-sigma factor that counteracts SpoIIAB and thus releases sigma F from inhibition. The protein is Anti-sigma F factor of Clostridium kluyveri (strain NBRC 12016).